The following is a 1407-amino-acid chain: Metabotropic glutamate receptor-like protein P (1407 aa).

Over 1-696 (MKFKKKNIYW…KTIKVTSFVK (696 aa)) the chain is Extracellular. N-linked (GlcNAc...) asparagine glycosylation is found at asparagine 43 and asparagine 58. 2 PbH1 repeats span residues 93-118 (ISDI…FDGG) and 129-150 (FVNV…FLYN). N-linked (GlcNAc...) asparagine glycans are attached at residues asparagine 162, asparagine 179, asparagine 182, asparagine 230, asparagine 241, asparagine 270, asparagine 368, asparagine 391, asparagine 464, asparagine 512, asparagine 539, asparagine 544, asparagine 554, asparagine 571, asparagine 627, and asparagine 646. The stretch at 254–279 (ISNVIFESCEFIGNRANSTGGLSFLT) is one PbH1 3 repeat. Residues 452–476 (GYSVYIENCEVKNNTGLFKGCFIDT) form a PbH1 4 repeat. A helical membrane pass occupies residues 697 to 717 (FLVGTLAAILLIILIISGFIS). At 718 to 731 (LKYRKKRVIRYSNP) the chain is on the cytoplasmic side. A helical membrane pass occupies residues 732–752 (LFLCIILVGCIIFLITIPVLF). Residues 753-758 (GSTSAT) are Extracellular-facing. Residues 759–779 (CKIRFPIIVIGSCLVTSSVFI) traverse the membrane as a helical segment. The Cytoplasmic portion of the chain corresponds to 780–806 (KQFRIWRLIKDIQLLRETNVENKYLLK). A helical membrane pass occupies residues 807–827 (FISILMVIPIIIVICSFFIFP). Topologically, residues 828–853 (THEKYTFNQRDITITHYCSDGSYLAY) are extracellular. A helical transmembrane segment spans residues 854–874 (VIIFLVYQMAILLFGCYLVIV). The Cytoplasmic segment spans residues 875-890 (CRKFRSIPGTFNEATY). Residues 891–911 (IGILIYNYTVVLIVAIPLAYV) traverse the membrane as a helical segment. Topologically, residues 912-919 (FNKNPLAN) are extracellular. A helical transmembrane segment spans residues 920–940 (FLIFSISIIVFVLSTIILLFI). The Cytoplasmic segment spans residues 941–1407 (PKFHFLLRKK…LSPINLSKRK (467 aa)). Over residues 991-1004 (QQRQGNLYNNNSLG) the composition is skewed to polar residues. Disordered stretches follow at residues 991–1072 (QQRQ…DPNF), 1084–1248 (GKRK…SSIG), 1267–1351 (KKVK…NFNE), and 1369–1407 (FHQK…SKRK). Over residues 1005–1029 (RSISSNTRKRSNNNINNNNNNNSFN) the composition is skewed to low complexity. Over residues 1030–1040 (MTGFSDSSSTI) the composition is skewed to polar residues. Over residues 1041–1071 (SNPNLTSFTSSPSSLNSSSDSDSTPDFNDPN) the composition is skewed to low complexity. Over residues 1084–1093 (GKRKSIEKNK) the composition is skewed to basic and acidic residues. Composition is skewed to low complexity over residues 1099–1147 (PNSP…NTPI), 1154–1246 (SSKT…SDSS), and 1276–1339 (SDST…NNNN). Positions 1315 to 1344 (NNNNNNNNNNNNNINNNNNNANNNNSDTDD) form a coiled coil.

Belongs to the G-protein coupled receptor 3 family. GABA-B receptor subfamily.

The protein resides in the membrane. In Dictyostelium discoideum (Social amoeba), this protein is Metabotropic glutamate receptor-like protein P (grlP).